Consider the following 478-residue polypeptide: Proline--tRNA ligase (478 aa).

Belongs to the class-II aminoacyl-tRNA synthetase family. ProS type 3 subfamily. Homodimer.

Its subcellular location is the cytoplasm. It carries out the reaction tRNA(Pro) + L-proline + ATP = L-prolyl-tRNA(Pro) + AMP + diphosphate. Catalyzes the attachment of proline to tRNA(Pro) in a two-step reaction: proline is first activated by ATP to form Pro-AMP and then transferred to the acceptor end of tRNA(Pro). In Ignicoccus hospitalis (strain KIN4/I / DSM 18386 / JCM 14125), this protein is Proline--tRNA ligase.